A 438-amino-acid polypeptide reads, in one-letter code: Adenosylhomocysteinase (438 aa).

Substrate contacts are provided by T61, D137, and E162. Residue 163–165 (TTT) coordinates NAD(+). Residues K192 and D196 each coordinate substrate. NAD(+)-binding positions include N197, 226-231 (GYGDVG), E249, N284, 305-307 (IGH), and N352.

The protein belongs to the adenosylhomocysteinase family. NAD(+) is required as a cofactor.

The protein resides in the cytoplasm. It catalyses the reaction S-adenosyl-L-homocysteine + H2O = L-homocysteine + adenosine. The protein operates within amino-acid biosynthesis; L-homocysteine biosynthesis; L-homocysteine from S-adenosyl-L-homocysteine: step 1/1. May play a key role in the regulation of the intracellular concentration of adenosylhomocysteine. In Flavobacterium psychrophilum (strain ATCC 49511 / DSM 21280 / CIP 103535 / JIP02/86), this protein is Adenosylhomocysteinase.